Here is a 251-residue protein sequence, read N- to C-terminus: Cholesterol 25-hydroxylase-like protein (251 aa).

The next 3 membrane-spanning stretches (helical) occupy residues 22-42 (FFPVLFSITVYLSFCLPFVLL), 69-89 (WSCLALSLYNHVVYIFPLSVL), and 108-128 (VVWDLAACLLLFDFQYFVWHL). One can recognise a Fatty acid hydroxylase domain in the interval 113–247 (AACLLLFDFQ…FTHWDKLFGT (135 aa)). The Histidine box-1 signature appears at 126 to 130 (WHLLH). Positions 141–145 (HKVHH) match the Histidine box-2 motif. The Histidine box-3 signature appears at 222 to 228 (HHDVHHQ).

It belongs to the sterol desaturase family. Fe cation is required as a cofactor.

Its subcellular location is the endoplasmic reticulum membrane. The enzyme catalyses cholesterol + AH2 + O2 = 25-hydroxycholesterol + A + H2O. It catalyses the reaction cholesterol + NADPH + O2 + H(+) = 25-hydroxycholesterol + NADP(+) + H2O. Its function is as follows. Catalyzes the formation of 25-hydroxycholesterol from cholesterol, leading to repress cholesterol biosynthetic enzymes. Plays a key role in cell positioning and movement in lymphoid tissues: 25-hydroxycholesterol is an intermediate in biosynthesis of 7-alpha,25-dihydroxycholesterol (7-alpha,25-OHC), an oxysterol that acts as a ligand for the G protein-coupled receptor GPR183/EBI2, a chemotactic receptor for a number of lymphoid cells. May play an important role in regulating lipid metabolism by synthesizing a corepressor that blocks sterol regulatory element binding protein (SREBP) processing. In testis, production of 25-hydroxycholesterol by macrophages may play a role in Leydig cell differentiation. The chain is Cholesterol 25-hydroxylase-like protein (ch25h) from Danio rerio (Zebrafish).